The following is a 191-amino-acid chain: MPLLHLLRQNPVIAAVKDNASLQLAIDSECQFISVLYGNICTISNIVKKIKNAGKYAFIHVDLLEGASNKEVVIQFLKLVTEADGIISTKASMLKAARAEGFFCIHRLFIVDSISFHNIDKQVAQSNPDCIEILPGCMPKVLGWVTEKIRQPLIAGGLVCDEEDARNAINAGVVALSTTNTGVWTLAKKLL.

To B.subtilis GlpP.

This is an uncharacterized protein from Escherichia coli (strain K12).